A 140-amino-acid chain; its full sequence is Ribosome-binding factor A (140 aa).

The span at 1 to 13 shows a compositional bias: basic residues; it reads MQKKSSSKSHRAT. Positions 1 to 22 are disordered; that stretch reads MQKKSSSKSHRATRGPSQRQLR.

This sequence belongs to the RbfA family. Monomer. Binds 30S ribosomal subunits, but not 50S ribosomal subunits or 70S ribosomes.

The protein localises to the cytoplasm. In terms of biological role, one of several proteins that assist in the late maturation steps of the functional core of the 30S ribosomal subunit. Associates with free 30S ribosomal subunits (but not with 30S subunits that are part of 70S ribosomes or polysomes). Required for efficient processing of 16S rRNA. May interact with the 5'-terminal helix region of 16S rRNA. This Parvibaculum lavamentivorans (strain DS-1 / DSM 13023 / NCIMB 13966) protein is Ribosome-binding factor A.